A 202-amino-acid polypeptide reads, in one-letter code: Type II restriction enzyme MthZI (202 aa).

It catalyses the reaction Endonucleolytic cleavage of DNA to give specific double-stranded fragments with terminal 5'-phosphates.. Its function is as follows. A P subtype restriction enzyme that recognizes the double-stranded sequence 5'-CTAG-3' and cleaves after C-1. This chain is Type II restriction enzyme MthZI, found in Methanothermobacter thermautotrophicus (Methanobacterium thermoformicicum).